The sequence spans 217 residues: MSKISSDQVRSIVSQLFKEAQESKRGFLETVELQINLKNYDTKKDKRFSGQIKIGTVTKPKLSVCVFADQQHCDEATKIGAEFMDIEALKKIGPKNKKAIKKLSKKYDAFLASESILRQVPKLLGPGLNKVGKFPTLLTHSEDMASKINDVKSTVKFQLKKVLCLAVAVGHIELTEREVATNIIQSINFLVSLLKKGWQNIKTLYVKTSMGPSHRVY.

An N6,N6-dimethyllysine; alternate modification is found at lysine 122. Lysine 122 carries the N6-methyllysine; alternate modification.

Belongs to the universal ribosomal protein uL1 family.

The polypeptide is Large ribosomal subunit protein uL1 (rpl10a) (Dictyostelium discoideum (Social amoeba)).